The sequence spans 257 residues: AT-hook motif nuclear-localized protein 16 (257 aa).

The interval M1–I71 is disordered. Residues K53–K65 constitute a DNA-binding region (a.T hook). The PPC domain maps to P77 to Q214.

In terms of assembly, interacts with FVE/MSI4 and MSI5 which are components of HDAC corepressor complexes. Preferentially expressed in the inflorescence meristem and young floral buds, as well as in seedling-stage vegetative meristems. Widely expressed in flowers, roots and stems, with relatively low expression in leaves.

The protein resides in the nucleus. Transcription factor that specifically binds AT-rich DNA sequences related to the nuclear matrix attachment regions (MARs). Encodes a nuclear matrix protein that acts in the maintenance of genomic integrity by silencing TEs and repeat-containing genes through epigenetic machinery. Acts as a chromatin remodeling factor that modifies the architecture of FLC and FWA chromatin by modulating both H3 acetylation and methylation leading to the regulation of FLC and FWA expression. Negatively regulates floral repressors including MAF4 and MAF5. Plays a transcription activation role in anther development. Regulates the expression of arabinogalactan proteins (AGPs) involved in the formation of the nexine layer of the pollen wall. Binds AGP6, AGP11, AGP23 and AGP40 promoters. In Arabidopsis thaliana (Mouse-ear cress), this protein is AT-hook motif nuclear-localized protein 16.